A 231-amino-acid polypeptide reads, in one-letter code: Ribonuclease 3 (231 aa).

Residues Ile-7–Gly-135 enclose the RNase III domain. Glu-48 is a Mg(2+) binding site. Asp-52 is an active-site residue. Residues Asn-121 and Glu-124 each coordinate Mg(2+). Residue Glu-124 is part of the active site. One can recognise a DRBM domain in the interval Asn-160–Asn-229.

It belongs to the ribonuclease III family. In terms of assembly, homodimer. Requires Mg(2+) as cofactor.

It localises to the cytoplasm. The enzyme catalyses Endonucleolytic cleavage to 5'-phosphomonoester.. Functionally, digests double-stranded RNA. Involved in the processing of primary rRNA transcript to yield the immediate precursors to the large and small rRNAs (23S and 16S). Processes some mRNAs, and tRNAs when they are encoded in the rRNA operon. Processes pre-crRNA and tracrRNA of type II CRISPR loci if present in the organism. This is Ribonuclease 3 from Chlamydia trachomatis serovar L2 (strain ATCC VR-902B / DSM 19102 / 434/Bu).